The chain runs to 298 residues: Cyclin-D4-2 (298 aa).

Belongs to the cyclin family. Cyclin D subfamily. Interacts with CDKA-1 to form a kinase complex.

In terms of biological role, may promote cell division. The protein is Cyclin-D4-2 (CYCD4-2) of Arabidopsis thaliana (Mouse-ear cress).